Here is a 201-residue protein sequence, read N- to C-terminus: Small ribosomal subunit protein uS4 (201 aa).

Residues 1-42 (MARYTGPVTRKSRRLGTDLVGGDQSFEKRPYPPGQHGRARIK) are disordered. One can recognise an S4 RNA-binding domain in the interval 91–157 (SRLDNVVYRA…VPFQIARETA (67 aa)).

Belongs to the universal ribosomal protein uS4 family. Part of the 30S ribosomal subunit. Contacts protein S5. The interaction surface between S4 and S5 is involved in control of translational fidelity.

Its function is as follows. One of the primary rRNA binding proteins, it binds directly to 16S rRNA where it nucleates assembly of the body of the 30S subunit. In terms of biological role, with S5 and S12 plays an important role in translational accuracy. This is Small ribosomal subunit protein uS4 from Mycobacterium marinum (strain ATCC BAA-535 / M).